We begin with the raw amino-acid sequence, 405 residues long: Adenylosuccinate synthetase (405 aa).

GTP-binding positions include 12–18 (GDEGKGK) and 40–42 (GHT). Catalysis depends on aspartate 13, which acts as the Proton acceptor. Mg(2+) contacts are provided by aspartate 13 and glycine 40. IMP-binding positions include 13-16 (DEGK), 38-41 (NAGH), threonine 121, arginine 135, glutamine 213, threonine 228, and arginine 297. The active-site Proton donor is histidine 41. 293 to 299 (TTTGRAR) serves as a coordination point for substrate. Residues arginine 299, 325 to 327 (KMD), and 390 to 392 (SAG) contribute to the GTP site.

The protein belongs to the adenylosuccinate synthetase family. Homodimer. Mg(2+) is required as a cofactor.

The protein resides in the cytoplasm. The enzyme catalyses IMP + L-aspartate + GTP = N(6)-(1,2-dicarboxyethyl)-AMP + GDP + phosphate + 2 H(+). It functions in the pathway purine metabolism; AMP biosynthesis via de novo pathway; AMP from IMP: step 1/2. In terms of biological role, plays an important role in the de novo pathway of purine nucleotide biosynthesis. Catalyzes the first committed step in the biosynthesis of AMP from IMP. The polypeptide is Adenylosuccinate synthetase (Deinococcus deserti (strain DSM 17065 / CIP 109153 / LMG 22923 / VCD115)).